Consider the following 405-residue polypeptide: Argininosuccinate synthase (405 aa).

Residue 11-19 coordinates ATP; it reads AYSGGLDTS. Tyrosine 90 provides a ligand contact to L-citrulline. Glycine 119 contacts ATP. Threonine 121, asparagine 125, and aspartate 126 together coordinate L-aspartate. Position 125 (asparagine 125) interacts with L-citrulline. L-citrulline contacts are provided by arginine 129, serine 178, serine 187, glutamate 263, and tyrosine 275.

It belongs to the argininosuccinate synthase family. Type 1 subfamily. As to quaternary structure, homotetramer.

The protein localises to the cytoplasm. It catalyses the reaction L-citrulline + L-aspartate + ATP = 2-(N(omega)-L-arginino)succinate + AMP + diphosphate + H(+). Its pathway is amino-acid biosynthesis; L-arginine biosynthesis; L-arginine from L-ornithine and carbamoyl phosphate: step 2/3. In Legionella pneumophila (strain Corby), this protein is Argininosuccinate synthase.